The chain runs to 75 residues: Small ribosomal subunit protein bS18 (75 aa).

The protein belongs to the bacterial ribosomal protein bS18 family. In terms of assembly, part of the 30S ribosomal subunit. Forms a tight heterodimer with protein bS6.

Functionally, binds as a heterodimer with protein bS6 to the central domain of the 16S rRNA, where it helps stabilize the platform of the 30S subunit. This Buchnera aphidicola subsp. Baizongia pistaciae (strain Bp) protein is Small ribosomal subunit protein bS18.